The sequence spans 536 residues: Probable cytochrome P450 520A1 (536 aa).

A helical transmembrane segment spans residues 1–21 (MEILTFIIYLITFFILFDFYK). Cysteine 479 is a heme binding site.

This sequence belongs to the cytochrome P450 family. Heme serves as cofactor.

It is found in the membrane. The chain is Probable cytochrome P450 520A1 (cyp520A1) from Dictyostelium discoideum (Social amoeba).